We begin with the raw amino-acid sequence, 194 residues long: Chromophore lyase CpcT/CpeT 1 (194 aa).

The protein belongs to the CpcT/CpeT biliprotein lyase family.

Functionally, covalently attaches a chromophore to Cys residue(s) of phycobiliproteins. The polypeptide is Chromophore lyase CpcT/CpeT 1 (Microcystis aeruginosa (strain NIES-843 / IAM M-2473)).